Consider the following 510-residue polypeptide: MTDAVQNETVQEASAQEENKLIAERRAKLDQIRKSCKANGHPNDFRRDSLAGDLQKEFGEKSKEELEALNHVVAIAGRVMAKRGPFLVIQETSGRIQAYADKDVQKVLKDKYQGLDIGDIIGVKGALHKSGKGDLYVNMEEYELLTKALRPLPEKFHGLTDQEMRYRQRYVDLIVNEDSRNAFVVRSKVMSAIRNFMISKQFMEVETPMMHVIPGGASARPFVTHHNALDMPMYLRIAPELYLKRLVVGGFDRVFEINRNFRNEGLSPRHNPEFTMMEFYMAYADYKDLMDLTEELLSSVALEVLGSTSMPYGEHTVEFGGTYTRMSMFEAIKHYNPDHAQIQALTEEDIQNRDLMVSIAKSVHVEVEPFWTCGQLLEEIFGETAEPKLMQPTFITGYPADISPLARRSDDNPFFTDRFEFFIGGREVANGFSELNDAEDQDARFKAQVEAKESGDDEAMFYDADYITALEHGLPPTAGQGIGIDRLVMLLTNTHTIRDVILFPAMRPQA.

Mg(2+)-binding residues include glutamate 420 and glutamate 427.

This sequence belongs to the class-II aminoacyl-tRNA synthetase family. Homodimer. It depends on Mg(2+) as a cofactor.

The protein resides in the cytoplasm. The enzyme catalyses tRNA(Lys) + L-lysine + ATP = L-lysyl-tRNA(Lys) + AMP + diphosphate. The chain is Lysine--tRNA ligase from Vibrio vulnificus (strain CMCP6).